Consider the following 450-residue polypeptide: tRNA modification GTPase MnmE (450 aa).

3 residues coordinate (6S)-5-formyl-5,6,7,8-tetrahydrofolate: Arg20, Glu78, and Lys117. Positions 211 to 372 (GFRMVIVGKP…LEEAIYRETQ (162 aa)) constitute a TrmE-type G domain. Asn221 is a K(+) binding site. GTP contacts are provided by residues 221–226 (NVGKST), 240–246 (TDIPGTT), and 265–268 (DTAG). Ser225 lines the Mg(2+) pocket. Positions 240, 242, and 245 each coordinate K(+). Thr246 contributes to the Mg(2+) binding site. Lys450 contacts (6S)-5-formyl-5,6,7,8-tetrahydrofolate.

The protein belongs to the TRAFAC class TrmE-Era-EngA-EngB-Septin-like GTPase superfamily. TrmE GTPase family. Homodimer. Heterotetramer of two MnmE and two MnmG subunits. K(+) serves as cofactor.

It is found in the cytoplasm. Its function is as follows. Exhibits a very high intrinsic GTPase hydrolysis rate. Involved in the addition of a carboxymethylaminomethyl (cmnm) group at the wobble position (U34) of certain tRNAs, forming tRNA-cmnm(5)s(2)U34. This is tRNA modification GTPase MnmE from Thermotoga petrophila (strain ATCC BAA-488 / DSM 13995 / JCM 10881 / RKU-1).